We begin with the raw amino-acid sequence, 161 residues long: Putative pre-16S rRNA nuclease (161 aa).

This sequence belongs to the YqgF nuclease family.

The protein resides in the cytoplasm. In terms of biological role, could be a nuclease involved in processing of the 5'-end of pre-16S rRNA. The chain is Putative pre-16S rRNA nuclease from Bradyrhizobium sp. (strain BTAi1 / ATCC BAA-1182).